The chain runs to 270 residues: tRNA 2-(methylsulfanyl)-N(6)-isopentenyladenosine(37) hydroxylase (270 aa).

6 residues coordinate Fe cation: Glu-59, Glu-137, His-140, Glu-190, Glu-219, and His-222.

The protein belongs to the MiaE family. Monomer. It depends on Fe cation as a cofactor.

It catalyses the reaction 2-methylsulfanyl-N(6)-dimethylallyladenosine(37) in tRNA + AH2 + O2 = N(6)-[(2E)-4-hydroxy-3-methylbut-2-en-1-yl]-2-(methylsulfanyl)adenosine(37) in tRNA + A + H2O. It functions in the pathway tRNA modification; 2-methylthio-N-6-(cis-hydroxy)isopentenyl adenosine-tRNA biosynthesis. In terms of biological role, involved in specific tRNA modification. Catalyzes the oxygen-dependent hydroxylation of 2-methylthio-N-6-isopentenyl adenosine (ms2i6A) to produce 2-methylthio-N-6-(cis-hydroxy)isopentenyl adenosine (ms2io6A) at position 37 in tRNAs. Can also use N6-(dimethylallyl)adenosine (i6A) as substrate, with lower efficiency. The presence of the hydroxyl group on the tRNA may regulate the ability of S.typhimurium to grow on the citric acid cycle (CAC) intermediates succinate, fumarate and malate. This chain is tRNA 2-(methylsulfanyl)-N(6)-isopentenyladenosine(37) hydroxylase, found in Salmonella typhimurium (strain LT2 / SGSC1412 / ATCC 700720).